A 560-amino-acid chain; its full sequence is Nuclear receptor subfamily 5 group A member 2 (560 aa).

Residues 21 to 55 (IASAPGSETRHSPKREEQLREKRAGLPDRHRRPIP) form a disordered region. Over residues 28-48 (ETRHSPKREEQLREKRAGLPD) the composition is skewed to basic and acidic residues. Positions 104 to 175 (EELCPVCGDK…KCIDVGMKLE (72 aa)) form a DNA-binding region, nuclear receptor. 8 residues coordinate Zn(2+): Cys-107, Cys-110, Cys-124, Cys-127, Cys-143, Cys-149, Cys-159, and Cys-162. 2 consecutive NR C4-type zinc fingers follow at residues 107-127 (CPVC…CESC) and 143-167 (CIEN…FKKC). The C-terminal extension (CTE) stretch occupies residues 173–188 (KLEAVRADRMRGGRNK). Residues 189-208 (FGPMYKRDRALKQQKKALIR) carry the FTZ-F1 box motif. Lys-289 participates in a covalent cross-link: Glycyl lysine isopeptide (Lys-Gly) (interchain with G-Cter in SUMO1). Positions 319 to 558 (SIPHLILELL…NLLIEMLHAK (240 aa)) constitute an NR LBD domain. 2 residues coordinate a phospholipid derivative: Tyr-535 and Lys-539. An AF-2 region spans residues 547 to 558 (YNNLLIEMLHAK).

Belongs to the nuclear hormone receptor family. NR5 subfamily. As to quaternary structure, monomer; Binds DNA as a monomer. Interacts with nuclear receptor corepressors NR0B1 and NR0B2; repressing NR5A2 nuclear receptor activity. Interacts with nuclear receptor coactivators CTNNB1, PPARGC1A and NCOA2; interaction takes place following ligand-binding and promotes target gene activation. Interacts (when sumoylated) with GPS2; interaction with GPS2 onto hepatic acute phase protein promoters prevents N-Cor corepressor complex dissociation. Interacts with HNF1A. Interacts with GRIP1. Post-translationally, sumoylated by SUMO1 at Lys-289 during the hepatic acute phase response, leading to promote interaction with GPS2 and prevent N-Cor corepressor complex dissociation.

Its subcellular location is the nucleus. It is found in the chromosome. In terms of biological role, orphan nuclear receptor that binds DNA as a monomer to the 5'-TCAAGGCCA-3' sequence and controls expression of target genes: regulates key biological processes, such as early embryonic development, cholesterol and bile acid synthesis pathways, as well as liver and pancreas morphogenesis. Ligand-binding causes conformational change which causes recruitment of coactivators, promoting target gene activation. The specific ligand is unknown, but specific phospholipids, such as phosphatidylethanolamine, phosphatidylserine, dilauroyl phosphatidylcholine and diundecanoyl phosphatidylcholine can act as ligand in vitro. Acts as a pioneer transcription factor, which unwraps target DNA from histones and elicits local opening of closed chromatin. Plays a central role during preimplantation stages of embryonic development. Plays a minor role in zygotic genome activation (ZGA) by regulating a small set of two-cell stage genes. Plays a major role in morula development (2-16 cells embryos) by acting as a master regulator at the 8-cell stage, controlling expression of lineage-specifying transcription factors and genes involved in mitosis, telomere maintenance and DNA repair. Zygotic NR5A2 binds to both closed and open chromatin with other transcription factors, often at SINE B1/Alu repeats DNA elements, promoting chromatin accessibility at nearby regulatory regions. Also involved in the epiblast stage of development and embryonic stem cell pluripotency, by promoting expression of POU5F1/OCT4. Regulates other processes later in development, such as formation of connective tissue in lower jaw and middle ear, neural stem cell differentiation, ovarian follicle development and Sertoli cell differentiation. Involved in exocrine pancreas development and acinar cell differentiation. Acts as an essential transcriptional regulator of lipid metabolism. Key regulator of cholesterol 7-alpha-hydroxylase gene (CYP7A) expression in liver. Activates the transcription of CYP2C38. Also acts as a negative regulator of inflammation in different organs, such as intestine, liver and pancreas. Protects against intestinal inflammation via its ability to regulate glucocorticoid production. Plays an anti-inflammatory role during the hepatic acute phase response by acting as a corepressor: inhibits the hepatic acute phase response by preventing dissociation of the N-Cor corepressor complex. Acts as a regulator of immunity by promoting lymphocyte T-cell development, proliferation and effector functions. Also involved in resolution of endoplasmic reticulum stress in the liver. This is Nuclear receptor subfamily 5 group A member 2 from Mus musculus (Mouse).